The following is a 476-amino-acid chain: Variant surface glycoprotein MITAT 1.2 (476 aa).

A signal peptide spans 1–26; sequence MPSNQEARLFLAVLVLAQVLPILVDS. Intrachain disulfides connect Cys41-Cys171 and Cys149-Cys213. N-linked (GlcNAc...) asparagine glycosylation is present at Asn289. Disordered stretches follow at residues 389–418 and 435–459; these read QKHK…CKSP and EEAK…TGSS. Intrachain disulfides connect Cys407-Cys419 and Cys415-Cys430. The segment covering 435–449 has biased composition (basic and acidic residues); it reads EEAKKVADETAKDGK. Residues 450–459 are compositionally biased toward low complexity; that stretch reads TGNTNTTGSS. Asn454 is a glycosylation site (N-linked (GlcNAc...) asparagine). Ser459 is lipidated: GPI-anchor amidated serine. The propeptide at 460 to 476 is removed in mature form; the sequence is NSFVISKTPLWLAVLLF.

In terms of assembly, homodimer.

It localises to the cell membrane. VSG forms a coat on the surface of the parasite. The trypanosome evades the immune response of the host by expressing a series of antigenically distinct VSGs from an estimated 1000 VSG genes. In Trypanosoma brucei brucei, this protein is Variant surface glycoprotein MITAT 1.2.